Consider the following 299-residue polypeptide: Probable tyrosine phosphatase protein J4 (299 aa).

The 274-residue stretch at 16 to 289 (VEALDFLSFM…VYCYQALYVW (274 aa)) folds into the Tyrosine-protein phosphatase domain. Cys-230 functions as the Phosphocysteine intermediate in the catalytic mechanism.

Belongs to the protein-tyrosine phosphatase family.

It catalyses the reaction O-phospho-L-tyrosyl-[protein] + H2O = L-tyrosyl-[protein] + phosphate. This chain is Probable tyrosine phosphatase protein J4 (J5), found in Microplitis demolitor bracovirus (isolate Webb) (MdBV).